The sequence spans 149 residues: Endoribonuclease YbeY (149 aa).

Zn(2+) contacts are provided by histidine 115, histidine 119, and histidine 125.

It belongs to the endoribonuclease YbeY family. Zn(2+) serves as cofactor.

The protein localises to the cytoplasm. Functionally, single strand-specific metallo-endoribonuclease involved in late-stage 70S ribosome quality control and in maturation of the 3' terminus of the 16S rRNA. This is Endoribonuclease YbeY from Mycoplasmopsis pulmonis (strain UAB CTIP) (Mycoplasma pulmonis).